A 428-amino-acid polypeptide reads, in one-letter code: Pyruvate kinase (428 aa).

Arginine 34 serves as a coordination point for substrate. Asparagine 36, serine 38, aspartate 68, and threonine 69 together coordinate K(+). 36-39 (NFSH) provides a ligand contact to ATP. The ATP site is built by arginine 75 and lysine 152. Glutamate 214 provides a ligand contact to Mg(2+). Substrate contacts are provided by glycine 237, aspartate 238, and threonine 270. Aspartate 238 lines the Mg(2+) pocket.

This sequence belongs to the pyruvate kinase family. In terms of assembly, homotetramer. The cofactor is Mg(2+). K(+) serves as cofactor.

It catalyses the reaction pyruvate + ATP = phosphoenolpyruvate + ADP + H(+). It functions in the pathway carbohydrate degradation; glycolysis; pyruvate from D-glyceraldehyde 3-phosphate: step 5/5. In Encephalitozoon cuniculi (strain GB-M1) (Microsporidian parasite), this protein is Pyruvate kinase (PYK1).